We begin with the raw amino-acid sequence, 406 residues long: Eukaryotic initiation factor 4A-I (406 aa).

A disordered region spans residues 1 to 21 (MSASQDSRSRDNGPDGMEPEG). The residue at position 2 (S2) is an N-acetylserine. The residue at position 4 (S4) is a Phosphoserine. The Q motif signature appears at 32-60 (DSLDDMNLSESLLRGIYAYGFEKPSAIQQ). Residues 63 to 234 (ILSCIKGYDV…KKFMRDPIRI (172 aa)) form the Helicase ATP-binding domain. 76–83 (AQSGTGKT) contributes to the ATP binding site. At K118 the chain carries N6-acetyllysine. A Glycyl lysine isopeptide (Lys-Gly) (interchain with G-Cter in SUMO2) cross-link involves residue K146. T158 bears the Phosphothreonine mark. K174 is subject to N6-acetyllysine. The DEAD box signature appears at 182 to 185 (DEAD). K193 carries the N6-acetyllysine modification. A Glycyl lysine isopeptide (Lys-Gly) (interchain with G-Cter in SUMO2) cross-link involves residue K225. K238 is subject to N6-acetyllysine; alternate. Residue K238 forms a Glycyl lysine isopeptide (Lys-Gly) (interchain with G-Cter in SUMO2); alternate linkage. The Helicase C-terminal domain occupies 245–406 (GIRQFYINVE…EMPLNVADLI (162 aa)). Glycyl lysine isopeptide (Lys-Gly) (interchain with G-Cter in SUMO2) cross-links involve residues K309, K369, and K381.

This sequence belongs to the DEAD box helicase family. eIF4A subfamily. As to quaternary structure, eIF4F is a multi-subunit complex, the composition of which varies with external and internal environmental conditions. It is composed of at least EIF4A, EIF4E and EIF4G1/EIF4G3. Interacts with PAIP1, EIF4E and UPF2. Found in a complex with XPO7, EIF4A1, ARHGAP1, VPS26A, VPS29, VPS35 and SFN. May interact with NOM1. Interacts with PDCD4; this interferes with the interaction between EIF4A and EIF4G. Interacts with RBM4. Interacts with DDX3X in an RNA-independent manner. Interacts with PKP1 (via N-terminus); the interaction promotes EIF4A1 recruitment to the cap-dependent translation complex and EIF4A1 ATPase activity.

The protein resides in the cytoplasm. Its subcellular location is the perinuclear region. It localises to the cell membrane. The protein localises to the stress granule. It catalyses the reaction ATP + H2O = ADP + phosphate + H(+). ATP-dependent RNA helicase which is a subunit of the eIF4F complex involved in cap recognition and is required for mRNA binding to ribosome. In the current model of translation initiation, eIF4A unwinds RNA secondary structures in the 5'-UTR of mRNAs which is necessary to allow efficient binding of the small ribosomal subunit, and subsequent scanning for the initiator codon. As a result, promotes cell proliferation and growth. The sequence is that of Eukaryotic initiation factor 4A-I (EIF4A1) from Pongo abelii (Sumatran orangutan).